Reading from the N-terminus, the 294-residue chain is MAQTGTDRVKRGMAEMQKGGVIMDVVNAEQAKIAEEAGAVAVMALERVPADIRAAGGVARMADPTIVEEVMNAVSIPVMAKARIGHIVEARVLEALGVDYIDESEVLTPADEEFHLNKNEFTVPFVCGCRDLGEATRRIAEGASMLRTKGEPGTGNIVEAVRHMRKVNAQVRKVVGMSDDELMTEAKNLGAPYELLKEIKAEGRLPVVNFAAGGVATPADAALMMQLGADGVFVGSGIFKSDNPAKFAKAIVEATTHFTDYKLIAELSKELGTAMKGIEISNLLPEQRMQERGW.

D-ribose 5-phosphate is bound at residue Asp24. Lys81 (schiff-base intermediate with D-ribose 5-phosphate) is an active-site residue. Gly153 serves as a coordination point for D-ribose 5-phosphate. Arg165 serves as a coordination point for D-glyceraldehyde 3-phosphate. Residues Gly214 and 235–236 (GS) contribute to the D-ribose 5-phosphate site.

It belongs to the PdxS/SNZ family. As to quaternary structure, in the presence of PdxT, forms a dodecamer of heterodimers.

The catalysed reaction is aldehydo-D-ribose 5-phosphate + D-glyceraldehyde 3-phosphate + L-glutamine = pyridoxal 5'-phosphate + L-glutamate + phosphate + 3 H2O + H(+). It functions in the pathway cofactor biosynthesis; pyridoxal 5'-phosphate biosynthesis. In terms of biological role, catalyzes the formation of pyridoxal 5'-phosphate from ribose 5-phosphate (RBP), glyceraldehyde 3-phosphate (G3P) and ammonia. The ammonia is provided by the PdxT subunit. Can also use ribulose 5-phosphate and dihydroxyacetone phosphate as substrates, resulting from enzyme-catalyzed isomerization of RBP and G3P, respectively. The protein is Pyridoxal 5'-phosphate synthase subunit PdxS of Bacillus licheniformis (strain ATCC 14580 / DSM 13 / JCM 2505 / CCUG 7422 / NBRC 12200 / NCIMB 9375 / NCTC 10341 / NRRL NRS-1264 / Gibson 46).